Here is a 142-residue protein sequence, read N- to C-terminus: Secreted acidic protein 1B (142 aa).

Acidic residues-rich tracts occupy residues 1-47 and 54-64; these read SDDE…DDNE and TNDDVDYGDGN. The tract at residues 1–74 is disordered; sequence SDDESGDDEN…DEAREIGDHS (74 aa). Topologically, residues 1–123 are extracellular; it reads SDDESGDDEN…YLRSGGSHFK (123 aa). Residues 65–74 show a composition bias toward basic and acidic residues; sequence DEAREIGDHS. A helical membrane pass occupies residues 124-141; that stretch reads GQLLNITLGLGFCILFLL. Leu142 is a topological domain (cytoplasmic).

Component of the acid-insoluble and acid-soluble organic matrix of the aragonitic skeleton (at protein level).

The protein resides in the membrane. In Acropora millepora (Staghorn coral), this protein is Secreted acidic protein 1B.